The primary structure comprises 329 residues: Serine dehydratase-like (329 aa).

An N-acetylmethionine modification is found at M1. K48 carries the post-translational modification N6-(pyridoxal phosphate)lysine.

Belongs to the serine/threonine dehydratase family. In terms of assembly, monomer. Homodimer. It depends on pyridoxal 5'-phosphate as a cofactor.

The enzyme catalyses L-serine = pyruvate + NH4(+). The catalysed reaction is L-threonine = 2-oxobutanoate + NH4(+). It catalyses the reaction L-glutamate = D-glutamate. Its activity is regulated as follows. Serine dehydratase activity is inhibited by manganese chloride, ferrous chloride, cobalt chloride, cupric chloride, nickel chloride and zinc chloride. Glutamate racemase activity is inhibited by manganese chloride, ferrous chloride, cupric chloride and zinc chloride. In terms of biological role, catalyzes the pyridoxal-phosphate-dependent dehydrative deamination of L-threonine and L-serine to ammonia and alpha-ketobutyrate and pyruvate, respectively. Also exhibits racemase activity towards L-glutamate and D-glutamate. This is Serine dehydratase-like (Sdsl) from Rattus norvegicus (Rat).